The chain runs to 189 residues: Blue copper protein (189 aa).

The N-terminal stretch at 1-24 is a signal peptide; that stretch reads MAFSNALVLCFLLAIINMALPSLA. A Phytocyanin domain is found at 25 to 124; sequence TVYTVGDTSG…GMKLSIKVKA (100 aa). 3 residues coordinate Cu cation: histidine 65, cysteine 106, and histidine 111. Residues cysteine 78 and cysteine 106 are joined by a disulfide bond. The span at 127 to 160 shows a compositional bias: low complexity; it reads GSSAAPSATPSSSGKGSPSSDDTPAATTTTTTPT. The disordered stretch occupies residues 127-165; sequence GSSAAPSATPSSSGKGSPSSDDTPAATTTTTTPTKQNES. An N-linked (GlcNAc...) asparagine glycan is attached at asparagine 163.

The polypeptide is Blue copper protein (Pisum sativum (Garden pea)).